The chain runs to 804 residues: Ribonucleoside-diphosphate reductase large subunit (804 aa).

The region spanning 1 to 92 (MYVLNRKGEE…TDNLHKNTSD (92 aa)) is the ATP-cone domain. ATP-binding positions include 5–6 (NR), 11–17 (EDISFDQ), threonine 53, and aspartate 57. Serine 216 contacts GDP. An intrachain disulfide couples cysteine 217 to cysteine 442. Residues 225-227 (DSI), lysine 242, arginine 255, and 262-263 (RG) contribute to the dTTP site. Asparagine 425 lines the GDP pocket. Asparagine 425 functions as the Proton acceptor in the catalytic mechanism. The active-site Cysteine radical intermediate is the cysteine 427. GDP is bound by residues glutamate 429 and 603-606 (TAST). Glutamate 429 functions as the Proton acceptor in the catalytic mechanism.

It belongs to the ribonucleoside diphosphate reductase large chain family. Heterodimer of a large and a small subunit.

It carries out the reaction a 2'-deoxyribonucleoside 5'-diphosphate + [thioredoxin]-disulfide + H2O = a ribonucleoside 5'-diphosphate + [thioredoxin]-dithiol. Its activity is regulated as follows. Under complex allosteric control mediated by deoxynucleoside triphosphates and ATP binding to separate specificity and activation sites on the large subunit. The type of nucleotide bound at the specificity site determines substrate preference. It seems probable that ATP makes the enzyme reduce CDP and UDP, dGTP favors ADP reduction and dTTP favors GDP reduction. Stimulated by ATP and inhibited by dATP binding to the activity site. Functionally, provides the precursors necessary for DNA synthesis. Catalyzes the biosynthesis of deoxyribonucleotides from the corresponding ribonucleotides. The protein is Ribonucleoside-diphosphate reductase large subunit (RNR1) of Plasmodium falciparum (isolate FCR-3 / Gambia).